The chain runs to 96 residues: Large ribosomal subunit protein uL23 (96 aa).

It belongs to the universal ribosomal protein uL23 family. As to quaternary structure, part of the 50S ribosomal subunit. Contacts protein L29, and trigger factor when it is bound to the ribosome.

In terms of biological role, one of the early assembly proteins it binds 23S rRNA. One of the proteins that surrounds the polypeptide exit tunnel on the outside of the ribosome. Forms the main docking site for trigger factor binding to the ribosome. This chain is Large ribosomal subunit protein uL23, found in Onion yellows phytoplasma (strain OY-M).